The primary structure comprises 120 residues: NAD(P)H-quinone oxidoreductase subunit 3, chloroplastic (120 aa).

3 helical membrane-spanning segments follow: residues 9–29, 64–84, and 88–108; these read IFWA…FISG, MFAL…PWAM, and VLGV…IVGL.

The protein belongs to the complex I subunit 3 family. NDH is composed of at least 16 different subunits, 5 of which are encoded in the nucleus.

The protein localises to the plastid. Its subcellular location is the chloroplast thylakoid membrane. The enzyme catalyses a plastoquinone + NADH + (n+1) H(+)(in) = a plastoquinol + NAD(+) + n H(+)(out). It carries out the reaction a plastoquinone + NADPH + (n+1) H(+)(in) = a plastoquinol + NADP(+) + n H(+)(out). NDH shuttles electrons from NAD(P)H:plastoquinone, via FMN and iron-sulfur (Fe-S) centers, to quinones in the photosynthetic chain and possibly in a chloroplast respiratory chain. The immediate electron acceptor for the enzyme in this species is believed to be plastoquinone. Couples the redox reaction to proton translocation, and thus conserves the redox energy in a proton gradient. The protein is NAD(P)H-quinone oxidoreductase subunit 3, chloroplastic of Panax ginseng (Korean ginseng).